Consider the following 331-residue polypeptide: Autoinducer 2 import system permease protein LsrD (331 aa).

Helical transmembrane passes span Y7–S27, I45–I65, F67–P87, I90–I110, L118–I138, L162–L182, T212–V232, S240–N260, I261–L281, and I288–V308.

It belongs to the binding-protein-dependent transport system permease family. AraH/RbsC subfamily. The complex is composed of two ATP-binding proteins (LsrA), two transmembrane proteins (LsrC and LsrD) and a solute-binding protein (LsrB).

Its subcellular location is the cell inner membrane. In terms of biological role, part of the ABC transporter complex LsrABCD involved in autoinducer 2 (AI-2) import. Probably responsible for the translocation of the substrate across the membrane. The chain is Autoinducer 2 import system permease protein LsrD (lsrD) from Yersinia enterocolitica serotype O:8 / biotype 1B (strain NCTC 13174 / 8081).